The following is a 177-amino-acid chain: ATP synthase subunit delta (177 aa).

It belongs to the ATPase delta chain family. In terms of assembly, F-type ATPases have 2 components, F(1) - the catalytic core - and F(0) - the membrane proton channel. F(1) has five subunits: alpha(3), beta(3), gamma(1), delta(1), epsilon(1). F(0) has three main subunits: a(1), b(2) and c(10-14). The alpha and beta chains form an alternating ring which encloses part of the gamma chain. F(1) is attached to F(0) by a central stalk formed by the gamma and epsilon chains, while a peripheral stalk is formed by the delta and b chains.

It localises to the cell inner membrane. F(1)F(0) ATP synthase produces ATP from ADP in the presence of a proton or sodium gradient. F-type ATPases consist of two structural domains, F(1) containing the extramembraneous catalytic core and F(0) containing the membrane proton channel, linked together by a central stalk and a peripheral stalk. During catalysis, ATP synthesis in the catalytic domain of F(1) is coupled via a rotary mechanism of the central stalk subunits to proton translocation. Its function is as follows. This protein is part of the stalk that links CF(0) to CF(1). It either transmits conformational changes from CF(0) to CF(1) or is implicated in proton conduction. This Shewanella sp. (strain ANA-3) protein is ATP synthase subunit delta.